A 434-amino-acid chain; its full sequence is ATP-dependent protease ATPase subunit HslU (434 aa).

ATP is bound by residues Ile18, 60–65, Asp247, Glu312, and Arg384; that span reads GVGKTE.

The protein belongs to the ClpX chaperone family. HslU subfamily. In terms of assembly, a double ring-shaped homohexamer of HslV is capped on each side by a ring-shaped HslU homohexamer. The assembly of the HslU/HslV complex is dependent on binding of ATP.

It is found in the cytoplasm. Its function is as follows. ATPase subunit of a proteasome-like degradation complex; this subunit has chaperone activity. The binding of ATP and its subsequent hydrolysis by HslU are essential for unfolding of protein substrates subsequently hydrolyzed by HslV. HslU recognizes the N-terminal part of its protein substrates and unfolds these before they are guided to HslV for hydrolysis. This is ATP-dependent protease ATPase subunit HslU from Brucella abortus (strain S19).